Reading from the N-terminus, the 302-residue chain is Large ribosomal subunit protein uL18 (302 aa).

It belongs to the universal ribosomal protein uL18 family. Component of the large ribosomal subunit (LSU).

It is found in the cytoplasm. The protein localises to the nucleus. Functionally, component of the ribosome, a large ribonucleoprotein complex responsible for the synthesis of proteins in the cell. The small ribosomal subunit (SSU) binds messenger RNAs (mRNAs) and translates the encoded message by selecting cognate aminoacyl-transfer RNA (tRNA) molecules. The large subunit (LSU) contains the ribosomal catalytic site termed the peptidyl transferase center (PTC), which catalyzes the formation of peptide bonds, thereby polymerizing the amino acids delivered by tRNAs into a polypeptide chain. The nascent polypeptides leave the ribosome through a tunnel in the LSU and interact with protein factors that function in enzymatic processing, targeting, and the membrane insertion of nascent chains at the exit of the ribosomal tunnel. This Cucumis sativus (Cucumber) protein is Large ribosomal subunit protein uL18 (RPL5).